A 745-amino-acid chain; its full sequence is Junction plakoglobin (745 aa).

Methionine 1 bears the N-acetylmethionine mark. The O-linked (GlcNAc) threonine glycan is linked to threonine 14. A phosphoserine mark is found at serine 99 and serine 125. 12 ARM repeats span residues 132-171 (NYQD…QLSK), 172-215 (KEAS…LSHH), 216-255 (REGL…NLLL), 258-297 (EGAK…LLAY), 298-341 (GNQE…LSVC), 342-381 (PSNK…NLSD), 383-420 (ATKQ…NLTC), 423-464 (SKNK…HLTS), 470-510 (EMAQ…NLAL), 512-551 (PANH…QPYT), 574-613 (PMNR…ELAQ), and 615-661 (KEAA…PDYR). The interval 132–297 (NYQDDAELAT…TTDCLQLLAY (166 aa)) is interaction with DSC1 and DSG1. Phosphoserine is present on serine 182. The tract at residues 574–661 (PMNRMEIFRL…ISEDKNPDYR (88 aa)) is interaction with DSC1. Phosphoserine occurs at positions 665 and 730.

The protein belongs to the beta-catenin family. Homodimer. Component of an E-cadherin/catenin adhesion complex composed of at least E-cadherin/CDH1 and gamma-catenin/JUP, and possibly alpha-catenin/CTNNA1; the complex is located to adherens junctions. The stable association of CTNNA1 is controversial as CTNNA1 was shown not to bind to F-actin when assembled in the complex. Interacts with MUC1. Interacts with CAV1. Interacts with PTPRJ. Interacts with DSG1. Interacts with DSC1 and DSC2. Interacts with PKP2. Interacts with PKP3 (via N-terminus); the interaction is required for PKP3 localization to desmosome cell-cell junctions. Interacts with DSG4. Post-translationally, may be phosphorylated by FER. In terms of tissue distribution, expressed in the mammary epithelium (at protein level).

It localises to the cell junction. The protein localises to the adherens junction. Its subcellular location is the desmosome. The protein resides in the cytoplasm. It is found in the cytoskeleton. It localises to the cell membrane. The protein localises to the nucleus. Its function is as follows. Common junctional plaque protein. The membrane-associated plaques are architectural elements in an important strategic position to influence the arrangement and function of both the cytoskeleton and the cells within the tissue. The presence of plakoglobin in both the desmosomes and in the intermediate junctions suggests that it plays a central role in the structure and function of submembranous plaques. Acts as a substrate for VE-PTP and is required by it to stimulate VE-cadherin function in endothelial cells. Can replace beta-catenin in E-cadherin/catenin adhesion complexes which are proposed to couple cadherins to the actin cytoskeleton. This is Junction plakoglobin from Mus musculus (Mouse).